Here is a 711-residue protein sequence, read N- to C-terminus: Acyl-CoA dehydrogenase FadE34 (711 aa).

It belongs to the acyl-CoA dehydrogenase family. As to quaternary structure, homodimer. FAD is required as a cofactor.

It carries out the reaction 3-oxochol-4-en-24-oyl-CoA + A = (22E)-3-oxochola-4,22-dien-24-oyl-CoA + AH2. It catalyses the reaction 3beta-hydroxy-chol-5-ene-24-oyl-CoA + A = 3beta-hydroxy-chol-5,22-dien-24-oyl-CoA + AH2. Its pathway is steroid metabolism; cholesterol degradation. Its function is as follows. Involved in the second cycle of side chain dehydrogenation in the beta-oxidation of cholesterol catabolism. It contributes partly to the virulence by increasing the efficiency of beta-oxidation. Catalyzes the dehydrogenation of the five-carbon steroid side chain of 3-oxo-chol-4-en-24-oyl-CoA (3-OCO-CoA) to yield 3-oxochol-4,22-dien-24-oyl-CoA. Can also use 3beta-hydroxy-chol-5-ene-24-oyl-CoA, and shows weak activity with cholyl-CoA and deoxycholyl-CoA. This chain is Acyl-CoA dehydrogenase FadE34 (fadE34), found in Mycobacterium tuberculosis (strain ATCC 25618 / H37Rv).